We begin with the raw amino-acid sequence, 625 residues long: Phosphomethylpyrimidine synthase (625 aa).

Residues Asn-230, Met-259, Tyr-288, His-324, 344–346, 385–388, and Glu-424 contribute to the substrate site; these read SRG and DGLR. A Zn(2+)-binding site is contributed by His-428. Tyr-451 contacts substrate. Position 492 (His-492) interacts with Zn(2+). The [4Fe-4S] cluster site is built by Cys-572, Cys-575, and Cys-580.

This sequence belongs to the ThiC family. As to quaternary structure, homodimer. [4Fe-4S] cluster serves as cofactor.

It carries out the reaction 5-amino-1-(5-phospho-beta-D-ribosyl)imidazole + S-adenosyl-L-methionine = 4-amino-2-methyl-5-(phosphooxymethyl)pyrimidine + CO + 5'-deoxyadenosine + formate + L-methionine + 3 H(+). Its pathway is cofactor biosynthesis; thiamine diphosphate biosynthesis. Catalyzes the synthesis of the hydroxymethylpyrimidine phosphate (HMP-P) moiety of thiamine from aminoimidazole ribotide (AIR) in a radical S-adenosyl-L-methionine (SAM)-dependent reaction. The chain is Phosphomethylpyrimidine synthase from Xanthomonas euvesicatoria pv. vesicatoria (strain 85-10) (Xanthomonas campestris pv. vesicatoria).